The primary structure comprises 458 residues: Dihydrolipoyllysine-residue acetyltransferase component of pyruvate dehydrogenase complex, mitochondrial (458 aa).

A mitochondrion-targeting transit peptide spans 1–28 (MIVPVLSRQALRHASVARVALPSLTRWY). The Lipoyl-binding domain maps to 34–110 (HTVVKMPALS…AVGNPIAILV (77 aa)). At lysine 75 the chain carries N6-lipoyllysine. Positions 126–164 (DAGGETSPAVPKDEPKNESTASAPTPAPTPAPEPENTSF) are disordered. The Peripheral subunit-binding (PSBD) domain occupies 177 to 214 (NALPAAKRLAREKGIDLRNVKGSGPGGKITEEDVKKAL). Catalysis depends on residues histidine 431 and aspartate 435.

The protein belongs to the 2-oxoacid dehydrogenase family. Requires (R)-lipoate as cofactor.

The protein localises to the mitochondrion matrix. The enzyme catalyses N(6)-[(R)-dihydrolipoyl]-L-lysyl-[protein] + acetyl-CoA = N(6)-[(R)-S(8)-acetyldihydrolipoyl]-L-lysyl-[protein] + CoA. Functionally, the pyruvate dehydrogenase complex catalyzes the overall conversion of pyruvate to acetyl-CoA and CO(2). It contains multiple copies of three enzymatic components: pyruvate dehydrogenase (E1), dihydrolipoamide acetyltransferase (E2) and lipoamide dehydrogenase (E3). In Neurospora crassa (strain ATCC 24698 / 74-OR23-1A / CBS 708.71 / DSM 1257 / FGSC 987), this protein is Dihydrolipoyllysine-residue acetyltransferase component of pyruvate dehydrogenase complex, mitochondrial (mrp-3).